Here is a 787-residue protein sequence, read N- to C-terminus: (-)-kolavenyl diphosphate synthase, chloroplastic (787 aa).

A chloroplast-targeting transit peptide spans 1-47 (MSFATSLPRPTTTGAAGFGLPLATCISLSVSHSFSPKFGICNNTSLR). Position 237 (Lys-237) interacts with substrate. Residues Asp-368 and Asp-370 each contribute to the Mg(2+) site. The DXDD motif motif lies at 368-371 (DSDD). Lys-454 serves as a coordination point for substrate.

This sequence belongs to the terpene synthase family. Tpsc subfamily. Mg(2+) serves as cofactor. As to expression, expressed in peltate glandular trichomes of leaves. Highly expressed in the first leaf pair.

It is found in the plastid. Its subcellular location is the chloroplast. It carries out the reaction (2E,6E,10E)-geranylgeranyl diphosphate = (-)-kolavenyl diphosphate. Its activity is regulated as follows. Inhibited by high concentrations of magnesium. Involved in the biosynthesis of clerodane diterpenoids natural products, including salvinorin A with potent agonistic activity on brain kappa-opioid receptors, thus conferring hallucinogenic properties. Diterpene synthase that catalyzes the formation of (-)-kolavenyl diphosphate from geranylgeranyl diphosphate (GGPP) as the first reaction in salvinorin A biosynthesis. The sequence is that of (-)-kolavenyl diphosphate synthase, chloroplastic from Salvia divinorum (Maria pastora).